The primary structure comprises 194 residues: MDPKDRKKIQFSVPAPPSQLDPRQVEMIRRRRPTPAMLFRVSEHSSPEEEASPHQRTSGEGHHPKSKRPNPCAYTPPSLKAVQHLQTISNLSENQASEEEDELGELRELGYPQEDDEEDEDEEEDEEEDSQAEVLKGSRGTVGQKPTCGRGLEGPWERPPPLDEPQRDGNSEDQVEGRATLSEPGEEPQHPSPP.

An N-acetylmethionine modification is found at Met1. The tract at residues 1–194 (MDPKDRKKIQ…GEEPQHPSPP (194 aa)) is disordered. A Phosphothreonine; by PKA modification is found at Thr34. A compositionally biased stretch (basic and acidic residues) spans 41–63 (VSEHSSPEEEASPHQRTSGEGHH). Phosphoserine occurs at positions 45 and 46. A Phosphothreonine modification is found at Thr75. Residues 84–95 (HLQTISNLSENQ) are compositionally biased toward polar residues. Phosphoserine occurs at positions 97 and 130. Over residues 113–131 (QEDDEEDEDEEEDEEEDSQ) the composition is skewed to acidic residues. Basic and acidic residues predominate over residues 160–170 (PPLDEPQRDGN). Phosphoserine is present on Ser192.

The protein belongs to the protein phosphatase inhibitor 1 family. Post-translationally, dopamine- and cyclic AMP-regulated neuronal phosphoprotein. Phosphorylation of Thr-34 is required for activity.

It localises to the cytoplasm. Functionally, inhibitor of protein-phosphatase 1. The sequence is that of Protein phosphatase 1 regulatory subunit 1B (Ppp1r1b) from Mus musculus (Mouse).